Reading from the N-terminus, the 68-residue chain is uncharacterized protein (68 aa).

The first 15 residues, M1–S15, serve as a signal peptide directing secretion. Positions Q14–F68 are disordered. Residues N18 and N58 are each glycosylated (N-linked (GlcNAc...) asparagine). Low complexity predominate over residues N22–N59.

Its subcellular location is the secreted. This is an uncharacterized protein from Dictyostelium discoideum (Social amoeba).